The sequence spans 733 residues: Exosome complex exonuclease RRP6 (733 aa).

Ser-138 bears the Phosphoserine mark. Residues 214-380 enclose the 3'-5' exonuclease domain; that stretch reads IWVDTSTELE…NIYDQLRNKL (167 aa). Mn(2+)-binding residues include Asp-238 and Glu-240. Zn(2+) is bound by residues Asp-238 and Glu-240. Positions 240 and 241 each coordinate AMP. UMP-binding residues include Glu-240 and His-241. A Mn(2+)-binding site is contributed by Asp-296. 3 residues coordinate AMP: Trp-299, Lys-342, and Gln-345. UMP contacts are provided by Trp-299, Lys-342, and Gln-345. Mn(2+) is bound at residue Asp-365. Position 365 (Asp-365) interacts with Zn(2+). In terms of domain architecture, HRDC spans 435–515; the sequence is PPEREVLVRE…RDALRNIKNT (81 aa). Thr-520 carries the post-translational modification Phosphothreonine. 2 positions are modified to phosphoserine: Ser-640 and Ser-645. The tract at residues 662–733 is disordered; it reads IQKKQPAKEK…AKGKNLSFKR (72 aa). Over residues 667–680 the composition is skewed to basic and acidic residues; it reads PAKEKGVTEKDAVD. The segment covering 687 to 697 has biased composition (polar residues); sequence ILSNKPGQNNR. 2 consecutive short sequence motifs (nuclear localization signal) follow at residues 700 to 704 and 718 to 721; these read KKRRF and KKRR. Residues 716 to 733 show a composition bias toward basic residues; it reads AAKKRRPAAKGKNLSFKR.

This sequence belongs to the exosome component 10/RRP6 family. As to quaternary structure, component of the RNA exosome complex. Specifically part of the catalytically inactive RNA exosome core complex (Exo-9) which may associate with the catalytic subunits RRP6 and DIS3 in cytoplasmic- and nuclear-specific RNA exosome complex forms. Exo-9 is formed by a hexameric base ring of RNase PH domain-containing subunits and a cap ring consisting of CSL4, RRP4 and RRP40. RRP6 specifically is part of the nuclear form of the RNA exosome complex; the association appears to be mediated by Exo-9 and not by DIS3. Interacts with LRP1. Interacts with NPL3, NOP53 and PAP1.

Its subcellular location is the nucleus. It is found in the nucleolus. Its function is as follows. Nuclear-specific catalytic component of the RNA exosome complex which has 3'-&gt;5' exoribonuclease activity and participates in a multitude of cellular RNA processing and degradation events. In the nucleus, the RNA exosome complex is involved in proper maturation of stable RNA species such as rRNA, snRNA and snoRNA, in the elimination of RNA processing by-products and non-coding 'pervasive' transcripts, such as antisense RNA species and cryptic unstable transcripts (CUTs), and of mRNAs with processing defects, thereby limiting or excluding their export to the cytoplasm. The catalytic inactive RNA exosome core complex of 9 subunits (Exo-9) is proposed to play a pivotal role in the binding and presentation of RNA for ribonucleolysis, and to serve as a scaffold for the association with catalytic subunits and accessory proteins or complexes. RRP6 has 3'-5' exonuclease activity which is not modulated upon association with Exo-9 suggesting that the complex inner RNA-binding path is not used to access its active site. This chain is Exosome complex exonuclease RRP6 (RRP6), found in Saccharomyces cerevisiae (strain ATCC 204508 / S288c) (Baker's yeast).